The sequence spans 345 residues: Linoleate 10R-lipoxygenase COP4 (345 aa).

Residues aspartate 87, aspartate 91, asparagine 222, serine 226, and glutamate 230 each contribute to the Mg(2+) site. Residues 87–91 (DEISD) carry the DDXXD motif motif.

It belongs to the terpene synthase family. It depends on Mg(2+) as a cofactor.

The enzyme catalyses (2E,6E)-farnesyl diphosphate + H2O = cubebol + diphosphate. It catalyses the reaction (2E,6E)-farnesyl diphosphate = beta-copaene + diphosphate. It carries out the reaction (2E,6E)-farnesyl diphosphate = beta-cubebene + diphosphate. The catalysed reaction is (2E,6E)-farnesyl diphosphate = (+)-sativene + diphosphate. Its function is as follows. Sesquiterpene synthase that catalyzes the cyclization of farnesyl diphosphate (FPP) into multiple products, including germacrene D, beta-copaene, beta-cubebene, (+)-sativene and cubebol, a natural sesquiterpene alcohol used in the food industry for its cooling and refreshing taste. Terpenoid hydrocarbons resulting from cyclization of farnesyl diphosphate are intermediates in the biosynthesis of biologically active compounds such as antibiotics, toxins and pheromones. In Coprinopsis cinerea (strain Okayama-7 / 130 / ATCC MYA-4618 / FGSC 9003) (Inky cap fungus), this protein is Linoleate 10R-lipoxygenase COP4 (COP4).